Here is a 562-residue protein sequence, read N- to C-terminus: MKKREHLGLGFFEWQIILWLSIWLAISQQALGLRPIREKPRSWSDEWLFGRKQEAEVGPFSAWNITGTYRGTWKFLNSLNSSSKFQDFQKENGNSVVELVAVPTKITGVHYVQGVVVFHDVFDNEQNVGGAQINLEGVYIWPFRQLRLVANSGKESDSGQEDNNLLSNPYHLLGIFSSQVFQESPRDRLLKRKLSPVNEMEKHCNIEIAAQVSRVASSENNGDKNYYHMEGLMESPGVGDDGDCFSPLLLNATSVNVEVYYNKAVNYTLMVTFVSFLQVLLLIRQMEHGNTQSGAAKVSIVMIGQQAIMDAYLCLLHLTAGILVESLFNAFATAAFFKFVVFSIFEMRYLLAIWKATRPSNSGEGWETMRRELSFLYSRFYGILLGGILIMYQFHNYMQPILLLMYSFWIPQIVANVVRDSRKPLHPYYILGMTATRLAIPLYVFGCPHNFMRVEPNKVWCICLCTFMGLQAVILLLQHYFGSRCFVPRQMLPEKYNYHRRFNRDVSRTTDCVICMTAIDLRQHTSDCMVTPCEHFFHSGCLQRWMDIKMECPTCRRSLPPA.

A signal peptide spans 1 to 32 (MKKREHLGLGFFEWQIILWLSIWLAISQQALG). Over 33 to 262 (LRPIREKPRS…TSVNVEVYYN (230 aa)) the chain is Lumenal. Residues 263-283 (KAVNYTLMVTFVSFLQVLLLI) traverse the membrane as a helical segment. The Cytoplasmic portion of the chain corresponds to 284–297 (RQMEHGNTQSGAAK). A helical membrane pass occupies residues 298–318 (VSIVMIGQQAIMDAYLCLLHL). The Lumenal portion of the chain corresponds to 319–321 (TAG). Residues 322 to 342 (ILVESLFNAFATAAFFKFVVF) traverse the membrane as a helical segment. Residues 343-373 (SIFEMRYLLAIWKATRPSNSGEGWETMRREL) lie on the Cytoplasmic side of the membrane. Residues 374 to 394 (SFLYSRFYGILLGGILIMYQF) traverse the membrane as a helical segment. Topologically, residues 395–397 (HNY) are lumenal. Residues 398–418 (MQPILLLMYSFWIPQIVANVV) traverse the membrane as a helical segment. Over 419 to 426 (RDSRKPLH) the chain is Cytoplasmic. A helical transmembrane segment spans residues 427–447 (PYYILGMTATRLAIPLYVFGC). The Lumenal portion of the chain corresponds to 448 to 458 (PHNFMRVEPNK). A helical transmembrane segment spans residues 459-479 (VWCICLCTFMGLQAVILLLQH). Over 480–562 (YFGSRCFVPR…PTCRRSLPPA (83 aa)) the chain is Cytoplasmic. The RING-type; atypical zinc-finger motif lies at 512–556 (CVICMTAIDLRQHTSDCMVTPCEHFFHSGCLQRWMDIKMECPTCR).

Highly expressed in stems. Expressed in root xylem and seed coat.

The protein localises to the endomembrane system. It carries out the reaction S-ubiquitinyl-[E2 ubiquitin-conjugating enzyme]-L-cysteine + [acceptor protein]-L-lysine = [E2 ubiquitin-conjugating enzyme]-L-cysteine + N(6)-ubiquitinyl-[acceptor protein]-L-lysine.. Its pathway is protein modification; protein ubiquitination. Functionally, E3 ubiquitin-protein ligase that regulates the degree of methylesterification of pectin in seed mucilage. May be involved in the recycling of pectin methylesterase enzymes in the endomembrane system of seed coat epidermal cells. Possesses E3 ubiquitin-protein ligase activity in vitro when associated with the E1 enzyme UBA1 and the E2 enzyme UBC8. May be involved in xylem development. The protein is Transmembrane E3 ubiquitin-protein ligase FLY1 of Arabidopsis thaliana (Mouse-ear cress).